The sequence spans 97 residues: Large ribosomal subunit protein bL28 (97 aa).

This sequence belongs to the bacterial ribosomal protein bL28 family.

This Nitrobacter winogradskyi (strain ATCC 25391 / DSM 10237 / CIP 104748 / NCIMB 11846 / Nb-255) protein is Large ribosomal subunit protein bL28.